The chain runs to 328 residues: Fructokinase-2 (328 aa).

This sequence belongs to the carbohydrate kinase PfkB family.

The catalysed reaction is D-fructose + ATP = D-fructose 6-phosphate + ADP + H(+). It functions in the pathway glycan biosynthesis; starch biosynthesis. Functionally, may play an important role in maintaining the flux of carbon towards starch formation. The polypeptide is Fructokinase-2 (FRK2) (Solanum lycopersicum (Tomato)).